A 374-amino-acid chain; its full sequence is Alpha-N-acetylgalactosaminide alpha-2,6-sialyltransferase 2 (374 aa).

Over 1-7 (MGLPRGS) the chain is Cytoplasmic. The chain crosses the membrane as a helical; Signal-anchor for type II membrane protein span at residues 8 to 28 (FFWLLLLLTAACSGLLFALYF). Over 29-374 (SAVQRYPGPA…KAGILQLYQR (346 aa)) the chain is Lumenal. 2 cysteine pairs are disulfide-bonded: Cys-66–Cys-148 and Cys-151–Cys-317. N-linked (GlcNAc...) asparagine glycosylation is found at Asn-85 and Asn-130. Asn-156 is a CMP-N-acetyl-beta-neuraminate binding site. Residue Asn-161 is glycosylated (N-linked (GlcNAc...) asparagine). 3 residues coordinate CMP-N-acetyl-beta-neuraminate: Asn-179, Ser-304, and His-336.

It belongs to the glycosyltransferase 29 family. In terms of tissue distribution, expressed in skeletal muscle, heart, kidney, placenta, lung and leukocytes.

The protein localises to the golgi apparatus membrane. The catalysed reaction is a beta-D-galactosyl-(1-&gt;3)-N-acetyl-alpha-D-galactosaminyl derivative + CMP-N-acetyl-beta-neuraminate = a beta-D-galactosyl-(1-&gt;3)-[N-acetyl-alpha-neuraminyl-(2-&gt;6)]-N-acetyl-alpha-D-galactosaminyl derivative + CMP + H(+). The enzyme catalyses a 3-O-[N-acetyl-alpha-D-galactosaminyl]-L-threonyl-[protein] + CMP-N-acetyl-beta-neuraminate = a 3-O-[N-acetyl-alpha-neuraminosyl-(2-&gt;6)-N-acetyl-alpha-D-galactosaminyl]-L-threonyl-[protein] + CMP + H(+). It catalyses the reaction a 3-O-[N-acetyl-alpha-neuraminyl-(2-&gt;3)-beta-D-galactosyl-(1-&gt;3)-N-acetyl-alpha-D-galactosaminyl]-L-threonyl-[protein] + CMP-N-acetyl-beta-neuraminate = a 3-O-{alpha-Neu5Ac-(2-&gt;3)-beta-D-Gal-(1-&gt;3)-[alpha-Neu5Ac-(2-&gt;6)]-alpha-D-GalNAc}-L-threonyl-[protein] + CMP + H(+). It functions in the pathway protein modification; protein glycosylation. Its function is as follows. Catalyzes the transfer of N-acetylneuraminyl groups onto glycan chains in glycoproteins. Conjugates sialic acid with an alpha-2-6 linkage to N-acetylgalactosamine (GalNAc) glycan chains linked to serine or threonine in glycoproteins. Sialylates alphaGalNAc- and Galbeta1-&gt;3GalNAc-O-Ser/Thr epitopes also known as Tn and T antigens. In Homo sapiens (Human), this protein is Alpha-N-acetylgalactosaminide alpha-2,6-sialyltransferase 2 (ST6GALNAC2).